Consider the following 363-residue polypeptide: UDP-N-acetylglucosamine--N-acetylmuramyl-(pentapeptide) pyrophosphoryl-undecaprenol N-acetylglucosamine transferase (363 aa).

Residues 15 to 17, Asn-127, Arg-169, Ser-197, Ile-251, 270 to 275, and Gln-296 each bind UDP-N-acetyl-alpha-D-glucosamine; these read TGG and ALTVSE.

The protein belongs to the glycosyltransferase 28 family. MurG subfamily.

It is found in the cell inner membrane. It catalyses the reaction di-trans,octa-cis-undecaprenyl diphospho-N-acetyl-alpha-D-muramoyl-L-alanyl-D-glutamyl-meso-2,6-diaminopimeloyl-D-alanyl-D-alanine + UDP-N-acetyl-alpha-D-glucosamine = di-trans,octa-cis-undecaprenyl diphospho-[N-acetyl-alpha-D-glucosaminyl-(1-&gt;4)]-N-acetyl-alpha-D-muramoyl-L-alanyl-D-glutamyl-meso-2,6-diaminopimeloyl-D-alanyl-D-alanine + UDP + H(+). The protein operates within cell wall biogenesis; peptidoglycan biosynthesis. Its function is as follows. Cell wall formation. Catalyzes the transfer of a GlcNAc subunit on undecaprenyl-pyrophosphoryl-MurNAc-pentapeptide (lipid intermediate I) to form undecaprenyl-pyrophosphoryl-MurNAc-(pentapeptide)GlcNAc (lipid intermediate II). The protein is UDP-N-acetylglucosamine--N-acetylmuramyl-(pentapeptide) pyrophosphoryl-undecaprenol N-acetylglucosamine transferase of Dichelobacter nodosus (strain VCS1703A).